A 715-amino-acid chain; its full sequence is Putative membrane protein IgaA homolog (715 aa).

A run of 5 helical transmembrane segments spans residues 2-22 (STIV…GLLW), 214-234 (EACA…GPTV), 235-255 (TLPW…WYLF), 349-369 (NLTL…YVPL), and 663-683 (ATSL…VLLI).

It belongs to the IgaA family.

The protein localises to the cell inner membrane. The protein is Putative membrane protein IgaA homolog of Yersinia pestis.